Here is an 835-residue protein sequence, read N- to C-terminus: Bifunctional uridylyltransferase/uridylyl-removing enzyme (835 aa).

A uridylyltransferase region spans residues 1–316 (MTDEAEDSGP…GGKPVAERSP (316 aa)). Positions 317–650 (LAEGVVEQDG…SADGPEPLGV (334 aa)) are uridylyl-removing. In terms of domain architecture, HD spans 431 to 554 (VDRHLIETAV…DALATGPAAW (124 aa)). Residues 610-645 (QTEPPADSAPAPSSPSSPSFPSPLSSPSSPSSADGP) are disordered. A compositionally biased stretch (pro residues) spans 621–630 (PSSPSSPSFP). Over residues 631–642 (SPLSSPSSPSSA) the composition is skewed to low complexity. 2 consecutive ACT domains span residues 651 to 736 (ELLI…LAER) and 765 to 835 (VIEV…SLRT).

Belongs to the GlnD family. Mg(2+) serves as cofactor.

It carries out the reaction [protein-PII]-L-tyrosine + UTP = [protein-PII]-uridylyl-L-tyrosine + diphosphate. It catalyses the reaction [protein-PII]-uridylyl-L-tyrosine + H2O = [protein-PII]-L-tyrosine + UMP + H(+). Its activity is regulated as follows. Uridylyltransferase (UTase) activity is inhibited by glutamine, while glutamine activates uridylyl-removing (UR) activity. Functionally, modifies, by uridylylation and deuridylylation, the PII regulatory proteins (GlnB and homologs), in response to the nitrogen status of the cell that GlnD senses through the glutamine level. Under low glutamine levels, catalyzes the conversion of the PII proteins and UTP to PII-UMP and PPi, while under higher glutamine levels, GlnD hydrolyzes PII-UMP to PII and UMP (deuridylylation). Thus, controls uridylylation state and activity of the PII proteins, and plays an important role in the regulation of nitrogen assimilation and metabolism. The sequence is that of Bifunctional uridylyltransferase/uridylyl-removing enzyme from Streptomyces coelicolor (strain ATCC BAA-471 / A3(2) / M145).